The sequence spans 422 residues: Phagosome assembly factor 1 (422 aa).

Belongs to the PHAF1 family. Interacts with BCAS3; the interaction is requrired for the association with the phagophore.

It localises to the cytoplasm. The protein localises to the preautophagosomal structure. Functionally, plays a regulatory role in autophagic activity. In complex with BCAS3, associates with the autophagosome formation site during both non-selective and selective autophagy. The protein is Phagosome assembly factor 1 of Homo sapiens (Human).